The sequence spans 422 residues: Synaptotagmin-1 (422 aa).

Residues 1–57 (MVSESHHEALAAPPVTTVATVLPHNATEPASPGEGKEDAFSKLKEKFMNELHKIPLP) lie on the Vesicular side of the membrane. Residue N25 is glycosylated (N-linked (GlcNAc...) asparagine). The chain crosses the membrane as a helical span at residues 58–80 (PWALIAIAIVAVLLVLTCCFCIC). Residues C75, C76, C78, C80, and C83 are each lipidated (S-palmitoyl cysteine). Residues 81–422 (KKCLFKKKNK…EVDAMLAVKK (342 aa)) lie on the Cytoplasmic side of the membrane. Positions 113 to 142 (TMKDQALKDDDAETGLTDGEEKEEPKEEEK) are disordered. Over residues 122–134 (DDAETGLTDGEEK) the composition is skewed to acidic residues. T129 carries the phosphothreonine modification. Positions 136–382 (EPKEEEKLGK…AIGKVFVGYN (247 aa)) are phospholipid binding. Residues 142-261 (KLGKLQYSLD…DFGHVTEEWR (120 aa)) form the C2 1 domain. 3 residues coordinate Ca(2+): L172, D173, and D179. Y230 carries the phosphotyrosine modification. D231, F232, D233, S236, K237, and D239 together coordinate Ca(2+). Residue S265 is modified to Phosphoserine. Residues 273 to 406 (KLGDICFSLR…NPRRPIAQWH (134 aa)) form the C2 2 domain. Positions 304 and 310 each coordinate Ca(2+). 2 positions are modified to phosphoserine: S343 and S345. 3 residues coordinate Ca(2+): D364, D366, and D372.

The protein belongs to the synaptotagmin family. As to quaternary structure, homotetramer. Heterodimer; heterodimerizes with SYT2 in presence of calcium. Interacts with SCAMP5. Interacts with STON2. Forms a complex with SV2B, syntaxin 1 and SNAP25. Interacts with SV2A, SV2B and SV2C. Interacts with RIMS1. Interacts with PRRT2. Interacts with DNAJC5 in a phosphorylation-dependent manner. Interacts (via N-terminus) with RAB3A. Interacts with SYT12. Interacts with calmodulin. Interacts with DNM1 (via C-terminal proline-rich domain (PRD)); this interaction facilitates vesicle fission during clathrin-mediated endocytosis (CME). Ca(2+) is required as a cofactor. Glycosylated.

It localises to the cytoplasmic vesicle. It is found in the secretory vesicle membrane. The protein resides in the secretory vesicle. The protein localises to the synaptic vesicle membrane. Its subcellular location is the chromaffin granule membrane. It localises to the cytoplasm. Functionally, calcium sensor that participates in triggering neurotransmitter release at the synapse. May have a regulatory role in the membrane interactions during trafficking of synaptic vesicles at the active zone of the synapse. It binds acidic phospholipids with a specificity that requires the presence of both an acidic head group and a diacyl backbone. A Ca(2+)-dependent interaction between synaptotagmin and putative receptors for activated protein kinase C has also been reported. It can bind to at least three additional proteins in a Ca(2+)-independent manner; these are neurexins, syntaxin and AP2. Plays a role in dendrite formation by melanocytes. The sequence is that of Synaptotagmin-1 from Bos taurus (Bovine).